A 507-amino-acid chain; its full sequence is Maturase K (507 aa).

It belongs to the intron maturase 2 family. MatK subfamily.

The protein resides in the plastid. Its subcellular location is the chloroplast. Functionally, usually encoded in the trnK tRNA gene intron. Probably assists in splicing its own and other chloroplast group II introns. In Magnolia figo (Banana shrub), this protein is Maturase K.